The sequence spans 318 residues: Acyl-CoA dehydrogenase IpdE2 (318 aa).

The FAD site is built by R210 and G277.

It belongs to the acyl-CoA dehydrogenase family. Heterotetramer composed of 2 IpdE1 subunits and 2 IpdE2 subunits. Requires FAD as cofactor.

It catalyses the reaction 3-[(3aS,4S,5R,7aS)-5-hydroxy-7a-methyl-1-oxo-octahydro-1H-inden-4-yl]propanoyl-CoA + A = (2E)-3-[(3aS,4S,5R,7aS)-5-hydroxy-7a-methyl-1-oxo-octahydro-1H-inden-4-yl]prop-2-enoyl-CoA + AH2. It functions in the pathway steroid metabolism; cholesterol degradation. Its function is as follows. Involved in cholesterol degradation. Catalyzes the dehydrogenation of 5OH-HIP-CoA to 5OH-HIPE-CoA. Can also use octanoyl-CoA and dihydroferuloyl-CoA, with lower efficiency. Cannot use 3-oxo-4-pregnene-20-carboxyl-CoA (3-OPC-CoA). The polypeptide is Acyl-CoA dehydrogenase IpdE2 (Mycobacterium tuberculosis (strain ATCC 25618 / H37Rv)).